A 72-amino-acid chain; its full sequence is MSRRKVCRFTVEGVKEIDYKDVNKLKAYITETGKIVPSRVTGTSAKYQRQLATAIKRARFLALLPYCDRHFN.

This sequence belongs to the bacterial ribosomal protein bS18 family. In terms of assembly, part of the 30S ribosomal subunit. Forms a tight heterodimer with protein bS6.

Its function is as follows. Binds as a heterodimer with protein bS6 to the central domain of the 16S rRNA, where it helps stabilize the platform of the 30S subunit. The chain is Small ribosomal subunit protein bS18 from Francisella tularensis subsp. novicida (strain U112).